A 94-amino-acid chain; its full sequence is PqqA binding protein (94 aa).

This sequence belongs to the PqqD family. As to quaternary structure, monomer. Interacts with PqqE.

It participates in cofactor biosynthesis; pyrroloquinoline quinone biosynthesis. Its function is as follows. Functions as a PqqA binding protein and presents PqqA to PqqE, in the pyrroloquinoline quinone (PQQ) biosynthetic pathway. This chain is PqqA binding protein, found in Acinetobacter baumannii (strain SDF).